The primary structure comprises 461 residues: Asparagine--tRNA ligase (461 aa).

It belongs to the class-II aminoacyl-tRNA synthetase family. In terms of assembly, homodimer.

It localises to the cytoplasm. The enzyme catalyses tRNA(Asn) + L-asparagine + ATP = L-asparaginyl-tRNA(Asn) + AMP + diphosphate + H(+). The chain is Asparagine--tRNA ligase from Nitratidesulfovibrio vulgaris (strain ATCC 29579 / DSM 644 / CCUG 34227 / NCIMB 8303 / VKM B-1760 / Hildenborough) (Desulfovibrio vulgaris).